Reading from the N-terminus, the 483-residue chain is Regulatory protein ViaA (483 aa).

This sequence belongs to the ViaA family. Homodimer. Interacts with RavA.

Its subcellular location is the cytoplasm. Functionally, component of the RavA-ViaA chaperone complex, which may act on the membrane to optimize the function of some of the respiratory chains. ViaA stimulates the ATPase activity of RavA. The chain is Regulatory protein ViaA from Shigella flexneri serotype 5b (strain 8401).